Here is a 639-residue protein sequence, read N- to C-terminus: Transcription factor phomR (639 aa).

The zn(2)-C6 fungal-type DNA-binding region spans 14–41 (CWTCRLRRKKCNEGGPPCDNCEARGIHC). Disordered regions lie at residues 58-136 (REEA…AGTG) and 476-499 (LPRS…TGPE). Positions 68 to 108 (SGRGRSYSRSSSTAAAAAPKPAEGAMVTGGSSSSSRGSGSS) are enriched in low complexity.

Its subcellular location is the nucleus. Its function is as follows. Transcription factor; part of the gene cluster that mediates the biosynthesis of the phomopsins, a group of hexapeptide mycotoxins which infects lupins and causes lupinosis disease in livestock. May play a role in the regulation of the production of phomopsins. This chain is Transcription factor phomR, found in Diaporthe leptostromiformis (Lupinosis disease fungus).